The primary structure comprises 111 residues: Iron-sulfur cluster assembly protein CyaY (111 aa).

It belongs to the frataxin family.

In terms of biological role, involved in iron-sulfur (Fe-S) cluster assembly. May act as a regulator of Fe-S biogenesis. The chain is Iron-sulfur cluster assembly protein CyaY from Cupriavidus necator (strain ATCC 17699 / DSM 428 / KCTC 22496 / NCIMB 10442 / H16 / Stanier 337) (Ralstonia eutropha).